We begin with the raw amino-acid sequence, 519 residues long: GATA zinc finger domain-containing protein 8 (519 aa).

Disordered stretches follow at residues 25-182 (YSTG…SSSG), 198-249 (SNIN…SNNT), 273-359 (SNNM…NNKQ), and 431-453 (DERQ…KRRE). Positions 37-156 (TNNSQNKTNN…SSSITSPSSN (120 aa)) are enriched in low complexity. The span at 172 to 182 (SPNNKQVSSSG) shows a compositional bias: polar residues. The segment covering 273-357 (SNNMNINNQH…SNINNNNNNN (85 aa)) has biased composition (low complexity). A coiled-coil region spans residues 429 to 461 (KTDERQQKKRMESDKNAEKREKRREASRLLNNV). The segment at 462 to 487 (CRNCKTTETPEWRKGPDGTKSLCNAC) adopts a GATA-type zinc-finger fold.

In Dictyostelium discoideum (Social amoeba), this protein is GATA zinc finger domain-containing protein 8 (gtaH).